The sequence spans 991 residues: Glutamate receptor 1 (991 aa).

A signal peptide spans 1–27; that stretch reads MHSRLKFLAYLHFICASSIFWPEFSSA. At 28-611 the chain is on the extracellular side; that stretch reads QQQQQTVSLT…VFSFLNPLSQ (584 aa). N-linked (GlcNAc...) asparagine glycans are attached at residues asparagine 67, asparagine 195, asparagine 208, and asparagine 281. Disordered regions lie at residues 300–321 and 354–379; these read DSRKRLEPSGQSQSQNAGGPNS and FRSNHLQRRSHGGSSSSSATGTNESS. Over residues 308-318 the composition is skewed to polar residues; the sequence is SGQSQSQNAGG. The span at 365 to 379 shows a compositional bias: low complexity; that stretch reads GGSSSSSATGTNESS. Residues asparagine 376, asparagine 385, asparagine 426, asparagine 437, and asparagine 477 are each glycosylated (N-linked (GlcNAc...) asparagine). Residues 612–632 form a helical membrane-spanning segment; it reads EIWISVILSYVGVSFVLYFVT. At 633-710 the chain is on the cytoplasmic side; that stretch reads RFPPYEWRIV…PSIAGRIAAA (78 aa). A helical transmembrane segment spans residues 711 to 731; the sequence is VWWFFTIILISSYTANLAAFL. Residues 732-895 lie on the Extracellular side of the membrane; the sequence is TVERMVAPIK…STPNELSLSN (164 aa). Residues 896 to 916 traverse the membrane as a helical segment; it reads VAGIYYILIGGLLLAVIVAIM. Over 917-991 the chain is Cytoplasmic; the sequence is EFFCRNKTPQ…ASNVRYQYSM (75 aa).

This sequence belongs to the glutamate-gated ion channel (TC 1.A.10.1) family. As to quaternary structure, homooligomer. Central nervous system.

It localises to the cell membrane. The protein localises to the postsynaptic cell membrane. Its function is as follows. Receptor for glutamate. L-glutamate acts as an excitatory neurotransmitter at many synapses in the central nervous system. The postsynaptic actions of Glu are mediated by a variety of receptors that are named according to their selective agonists. Forms ligand-gated ion channels which are activated by kainate. The protein is Glutamate receptor 1 (GluRIA) of Drosophila melanogaster (Fruit fly).